The primary structure comprises 64 residues: Large ribosomal subunit protein bL33 (64 aa).

This sequence belongs to the bacterial ribosomal protein bL33 family.

The chain is Large ribosomal subunit protein bL33 from Synechococcus sp. (strain WH7803).